The sequence spans 149 residues: Calmodulin-like protein 3 (149 aa).

EF-hand domains lie at 8 to 43 (EQVTEFKEAFSLFDKDGDGCITTRELGTVMRSLGQN), 44 to 79 (PTEAELRDMMSEIDRDGNGTVDFPEFLGMMARKMKD), 81 to 116 (DNEEEIREAFRVFDKDGNGFVSAAELRHVMTRLGEK), and 117 to 149 (LSDEEVDEMIRAADTDGDGQVNYEEFVRVLVSK). Ca(2+) contacts are provided by Asp-21, Asp-23, Asp-25, Cys-27, Glu-32, Asp-57, Asp-59, Asn-61, Thr-63, Glu-68, Asp-94, Asp-96, Asn-98, Glu-105, Asp-130, Asp-132, Asp-134, Gln-136, and Glu-141.

Belongs to the calmodulin family. In terms of assembly, interacts with MYO10, the interaction is calcium-dependent and essential for MYO10 function in filopodial extension. Expressed in normal mammary, prostate, cervical, and epidermal tissues. It is greatly reduced or undetectable in transformed cells.

In terms of biological role, may function as a specific light chain of unconventional myosin-10 (MYO10), also enhances MYO10 translation, possibly by acting as a chaperone for the emerging MYO10 heavy chain protein. May compete with calmodulin by binding, with different affinities, to cellular substrates. The sequence is that of Calmodulin-like protein 3 (CALML3) from Homo sapiens (Human).